The primary structure comprises 352 residues: Mitochondrial adenine nucleotide transporter ADNT1 (352 aa).

3 Solcar repeats span residues Lys-36–Gly-123, Leu-139–Trp-227, and Leu-242–Val-343. Transmembrane regions (helical) follow at residues Ser-41–Arg-61, Gly-100–Ala-120, Leu-145–Met-162, Gly-202–Tyr-221, Leu-242–Tyr-263, and Val-324–Val-340.

This sequence belongs to the mitochondrial carrier (TC 2.A.29) family. In terms of tissue distribution, expressed in seedling radicles and roots, vasculature of cotyledons, leaf primordia, leaves and sepals.

Its subcellular location is the mitochondrion inner membrane. Inhibited by pyridoxal 5-phosphate, bathophenanthroline, mersalyl, p-hydroxymercuribenzoate and tannic acid. Functionally, mitochondrial adenylate carrier that catalyzes specifically the transport of ATP, ADP and AMP by a counter-exchange mechanism across the inner mitochondrial membrane. Substrate preference in reconstituted proteoliposomes is ATP &gt; AMP &gt; ADP. May play a role in oxidative phosphorylation and be important for the provision of energy required to support growth in heterotrophic tissues. This Arabidopsis thaliana (Mouse-ear cress) protein is Mitochondrial adenine nucleotide transporter ADNT1 (ADNT1).